A 616-amino-acid chain; its full sequence is Sulfite reductase [NADPH] flavoprotein alpha-component (616 aa).

Residues 80 to 218 (LTIIFASQTG…SAAQWRKQAL (139 aa)) enclose the Flavodoxin-like domain. Residues 86 to 91 (SQTGNA), 133 to 136 (STNG), and 169 to 178 (LGDSSYEFFC) each bind FMN. The FAD-binding FR-type domain maps to 251-465 (QKPYAATLLT…VENNNNFKLP (215 aa)). FAD-binding positions include T339, G373, 403 to 406 (RLYS), 421 to 423 (TVG), Y427, and 436 to 439 (GGAS). Residues 536-537 (SR), 542-546 (KVYVQ), and D578 each bind NADP(+). FAD is bound at residue Y616.

The protein belongs to the NADPH-dependent sulphite reductase flavoprotein subunit CysJ family. It in the N-terminal section; belongs to the flavodoxin family. In the C-terminal section; belongs to the flavoprotein pyridine nucleotide cytochrome reductase family. As to quaternary structure, alpha(8)-beta(8). The alpha component is a flavoprotein, the beta component is a hemoprotein. FAD is required as a cofactor. The cofactor is FMN.

It catalyses the reaction hydrogen sulfide + 3 NADP(+) + 3 H2O = sulfite + 3 NADPH + 4 H(+). It functions in the pathway sulfur metabolism; hydrogen sulfide biosynthesis; hydrogen sulfide from sulfite (NADPH route): step 1/1. Its function is as follows. Component of the sulfite reductase complex that catalyzes the 6-electron reduction of sulfite to sulfide. This is one of several activities required for the biosynthesis of L-cysteine from sulfate. The flavoprotein component catalyzes the electron flow from NADPH -&gt; FAD -&gt; FMN to the hemoprotein component. The sequence is that of Sulfite reductase [NADPH] flavoprotein alpha-component from Vibrio vulnificus (strain CMCP6).